Consider the following 146-residue polypeptide: UPF0178 protein LMOf2365_1475 (146 aa).

The protein belongs to the UPF0178 family.

The protein is UPF0178 protein LMOf2365_1475 of Listeria monocytogenes serotype 4b (strain F2365).